The following is a 445-amino-acid chain: Argininosuccinate synthase (445 aa).

Residues 17–25 and Ala-43 contribute to the ATP site; that span reads AFSGGLDTS. Tyr-99 contacts L-citrulline. 2 residues coordinate ATP: Gly-129 and Thr-131. L-aspartate-binding residues include Thr-131, Asn-135, and Asp-136. Asn-135 is a binding site for L-citrulline. An ATP-binding site is contributed by Asp-136. Residues Arg-139 and Ser-192 each contribute to the L-citrulline site. Asp-194 is an ATP binding site. Positions 201, 203, and 280 each coordinate L-citrulline.

This sequence belongs to the argininosuccinate synthase family. Type 2 subfamily. Homotetramer.

Its subcellular location is the cytoplasm. The catalysed reaction is L-citrulline + L-aspartate + ATP = 2-(N(omega)-L-arginino)succinate + AMP + diphosphate + H(+). Its pathway is amino-acid biosynthesis; L-arginine biosynthesis; L-arginine from L-ornithine and carbamoyl phosphate: step 2/3. This Bradyrhizobium sp. (strain BTAi1 / ATCC BAA-1182) protein is Argininosuccinate synthase.